Reading from the N-terminus, the 590-residue chain is Probable lysosomal cobalamin transporter (590 aa).

10 consecutive transmembrane segments (helical) span residues 8–28, 46–66, 94–114, 145–165, 190–210, 314–334, 348–367, 376–396, 421–441, and 508–528; these read LIWV…SIFI, IFTL…VALV, AVAY…VVPF, TVAF…VPIG, ALTF…VLYT, LLSG…MLLT, CGYI…VFVH, YILF…GIAT, ITTV…SMVV, and FFGI…LLVF. The segment at 567–590 is disordered; the sequence is WEDITGRASRSPQVSGSAGRGTRE.

This sequence belongs to the LIMR family. LMBRD1 subfamily.

The protein resides in the lysosome membrane. Probable lysosomal cobalamin transporter. Required to export cobalamin from lysosomes allowing its conversion to cofactors. This Ajellomyces capsulatus (strain NAm1 / WU24) (Darling's disease fungus) protein is Probable lysosomal cobalamin transporter.